The following is a 492-amino-acid chain: Trypanothione reductase (492 aa).

FAD is bound at residue 35-52 (DVQTHHGPPHYAALGGTC). Cys-52 and Cys-57 are joined by a disulfide. His-461 (proton acceptor) is an active-site residue.

This sequence belongs to the class-I pyridine nucleotide-disulfide oxidoreductase family. As to quaternary structure, homodimer. Requires FAD as cofactor.

The protein localises to the cytoplasm. The enzyme catalyses trypanothione + NADP(+) = trypanothione disulfide + NADPH + H(+). In terms of biological role, trypanothione is the parasite analog of glutathione; this enzyme is the equivalent of glutathione reductase. The polypeptide is Trypanothione reductase (TPR) (Trypanosoma brucei brucei).